Consider the following 433-residue polypeptide: Glutamyl-tRNA reductase (433 aa).

Residues 49-52 (TCNR), Ser114, 119-121 (EPQ), and Gln125 each bind substrate. Cys50 acts as the Nucleophile in catalysis. 201–206 (GAGETI) provides a ligand contact to NADP(+).

This sequence belongs to the glutamyl-tRNA reductase family. As to quaternary structure, homodimer.

It carries out the reaction (S)-4-amino-5-oxopentanoate + tRNA(Glu) + NADP(+) = L-glutamyl-tRNA(Glu) + NADPH + H(+). The protein operates within porphyrin-containing compound metabolism; protoporphyrin-IX biosynthesis; 5-aminolevulinate from L-glutamyl-tRNA(Glu): step 1/2. Catalyzes the NADPH-dependent reduction of glutamyl-tRNA(Glu) to glutamate 1-semialdehyde (GSA). The protein is Glutamyl-tRNA reductase of Histophilus somni (strain 2336) (Haemophilus somnus).